Here is a 166-residue protein sequence, read N- to C-terminus: Small ribosomal subunit protein uS5 (166 aa).

The S5 DRBM domain occupies 12-75 (YIEKLVQVNR…EAARRNMIQV (64 aa)).

It belongs to the universal ribosomal protein uS5 family. As to quaternary structure, part of the 30S ribosomal subunit. Contacts proteins S4 and S8.

With S4 and S12 plays an important role in translational accuracy. In terms of biological role, located at the back of the 30S subunit body where it stabilizes the conformation of the head with respect to the body. The protein is Small ribosomal subunit protein uS5 of Ectopseudomonas mendocina (strain ymp) (Pseudomonas mendocina).